The sequence spans 21 residues: Hemocyanin subunit 1 (21 aa).

This sequence belongs to the tyrosinase family. Hemocyanin subfamily. Hemolymph.

It localises to the secreted. The protein localises to the extracellular space. Hemocyanins are copper-containing oxygen carriers occurring freely dissolved in the hemolymph of many mollusks and arthropods. The chain is Hemocyanin subunit 1 from Maja squinado (Mediterranean spider crab).